We begin with the raw amino-acid sequence, 310 residues long: Ribosomal RNA small subunit methyltransferase H (310 aa).

S-adenosyl-L-methionine-binding positions include 32 to 34, Asp52, Phe79, Asp100, and Gln107; that span reads GGH.

This sequence belongs to the methyltransferase superfamily. RsmH family.

The protein localises to the cytoplasm. It carries out the reaction cytidine(1402) in 16S rRNA + S-adenosyl-L-methionine = N(4)-methylcytidine(1402) in 16S rRNA + S-adenosyl-L-homocysteine + H(+). In terms of biological role, specifically methylates the N4 position of cytidine in position 1402 (C1402) of 16S rRNA. In Bacillus cereus (strain B4264), this protein is Ribosomal RNA small subunit methyltransferase H.